The primary structure comprises 244 residues: Ubiquinone biosynthesis O-methyltransferase (244 aa).

S-adenosyl-L-methionine is bound by residues arginine 36, glycine 60, aspartate 81, and leucine 123.

The protein belongs to the methyltransferase superfamily. UbiG/COQ3 family.

It carries out the reaction a 3-demethylubiquinol + S-adenosyl-L-methionine = a ubiquinol + S-adenosyl-L-homocysteine + H(+). The enzyme catalyses a 3-(all-trans-polyprenyl)benzene-1,2-diol + S-adenosyl-L-methionine = a 2-methoxy-6-(all-trans-polyprenyl)phenol + S-adenosyl-L-homocysteine + H(+). The protein operates within cofactor biosynthesis; ubiquinone biosynthesis. In terms of biological role, O-methyltransferase that catalyzes the 2 O-methylation steps in the ubiquinone biosynthetic pathway. The protein is Ubiquinone biosynthesis O-methyltransferase of Rickettsia felis (strain ATCC VR-1525 / URRWXCal2) (Rickettsia azadi).